A 622-amino-acid polypeptide reads, in one-letter code: Low affinity potassium transport system protein Kup (622 aa).

The next 12 helical transmembrane spans lie at 9–29 (LPAITLAAIGVVYGDIGTSPL), 49–69 (VFGFLSLIFWLLIFVVSIKYL), 103–123 (VIMGLIGGSFFYGEVVITPAI), 137–157 (PQLDTWIVPLSIIVLTLLFMI), 165–185 (VGKLFAPIMLTWFLILAGLGL), 213–233 (VSFIALGAVVLSITGGEALYA), 247–267 (WFTVVLPSLTLNYFGQGALLL), 276–296 (PFFLLAPDWALIPLLIIAALA), 337–357 (IYIPFVNWMLYVAVVIVIVSF), 363–383 (LAAAYGIAVTGTMVLTSILST), 396–416 (FVALILIAFLCVDIPLFTANL), and 419–439 (LLSGGWLPLSLGTVMFIVMTT).

This sequence belongs to the HAK/KUP transporter (TC 2.A.72) family.

The protein localises to the cell inner membrane. It catalyses the reaction K(+)(in) + H(+)(in) = K(+)(out) + H(+)(out). In terms of biological role, responsible for the low-affinity transport of potassium into the cell. Likely operates as a K(+):H(+) symporter. This chain is Low affinity potassium transport system protein Kup, found in Shigella flexneri serotype 5b (strain 8401).